Consider the following 173-residue polypeptide: Sterile alpha motif domain-containing protein 5 (173 aa).

The region spanning 1 to 65 is the SAM domain; the sequence is MCTNIVYEWL…LEAVRRLREQ (65 aa). Residues 75–119 are disordered; that stretch reads TLEPQPAPPGPPADAVPTGRRGEPCGGPAQGTRGDSRGHTTAPRS. Positions 79-88 are enriched in pro residues; sequence QPAPPGPPAD.

Interacts promiscuously (via SAM domain) with EPHA5, EPHA6, EPHA7, EPHA8, EPHB1, EPHB2, EPHB3 and EPHB4 (via SAM domain) (in vitro). Detected in biliary epithelial cells on bile ducts at the hepatic hilum (at protein level).

It localises to the cytoplasm. The sequence is that of Sterile alpha motif domain-containing protein 5 (SAMD5) from Homo sapiens (Human).